The primary structure comprises 155 residues: 3-dehydroquinate dehydratase (155 aa).

Residue tyrosine 31 is the Proton acceptor of the active site. 3 residues coordinate substrate: asparagine 83, histidine 89, and aspartate 96. The active-site Proton donor is the histidine 109. Substrate-binding positions include 110-111 (LS) and arginine 120.

This sequence belongs to the type-II 3-dehydroquinase family. As to quaternary structure, homododecamer.

The enzyme catalyses 3-dehydroquinate = 3-dehydroshikimate + H2O. Its pathway is metabolic intermediate biosynthesis; chorismate biosynthesis; chorismate from D-erythrose 4-phosphate and phosphoenolpyruvate: step 3/7. Its function is as follows. Catalyzes a trans-dehydration via an enolate intermediate. In Laribacter hongkongensis (strain HLHK9), this protein is 3-dehydroquinate dehydratase.